Here is a 324-residue protein sequence, read N- to C-terminus: Beta-ketoacyl-[acyl-carrier-protein] synthase III (324 aa).

Catalysis depends on residues Cys-112 and His-249. The tract at residues 250–254 (QANRR) is ACP-binding. The active site involves Asn-279.

This sequence belongs to the thiolase-like superfamily. FabH family. As to quaternary structure, homodimer.

The protein resides in the cytoplasm. The catalysed reaction is malonyl-[ACP] + acetyl-CoA + H(+) = 3-oxobutanoyl-[ACP] + CO2 + CoA. Its pathway is lipid metabolism; fatty acid biosynthesis. Functionally, catalyzes the condensation reaction of fatty acid synthesis by the addition to an acyl acceptor of two carbons from malonyl-ACP. Catalyzes the first condensation reaction which initiates fatty acid synthesis and may therefore play a role in governing the total rate of fatty acid production. Possesses both acetoacetyl-ACP synthase and acetyl transacylase activities. Its substrate specificity determines the biosynthesis of branched-chain and/or straight-chain of fatty acids. The protein is Beta-ketoacyl-[acyl-carrier-protein] synthase III of Streptococcus pyogenes serotype M3 (strain ATCC BAA-595 / MGAS315).